A 258-amino-acid polypeptide reads, in one-letter code: Short-chain dehydrogenase reductase 3c (258 aa).

12-36 (IITGGASGIGADAARLFTDHGAKVV) provides a ligand contact to NAD(+). Ser-144 serves as a coordination point for substrate. The active-site Proton acceptor is the Tyr-156.

This sequence belongs to the short-chain dehydrogenases/reductases (SDR) family.

This chain is Short-chain dehydrogenase reductase 3c (SDR3c), found in Arabidopsis thaliana (Mouse-ear cress).